The following is a 306-amino-acid chain: MKILLIAGGWSPERQVSLNGARAMVPALEARGHEVTFFDLLENFNGLLAAAEQHDFALINLHGAPGEDGLVQAMLDQVGCPYQGAGPAGSFLALNKCAAKQIFRRAGLPTADWDFVPAFPGKDWQPRLPYPLFVKSNTGGSSLRLGRARNRAELDDIMGQIFAAGEEVIMEPVLPGREVTCGILGEDPLPPILIEPVAGDFFNYESKYEQDGARELCPAPIGDELTARVQELTLAAHRALGLRGYSRADFILGPDDSLTLLEVNTLPGMTATSLVPREARTIGLDFGQLLERLMELGLADCKKKQM.

The region spanning 100 to 295 is the ATP-grasp domain; the sequence is KQIFRRAGLP…FGQLLERLME (196 aa). An ATP-binding site is contributed by 127-180; sequence RLPYPLFVKSNTGGSSLRLGRARNRAELDDIMGQIFAAGEEVIMEPVLPGREVT. Residues aspartate 249, glutamate 262, and asparagine 264 each coordinate Mg(2+).

The protein belongs to the D-alanine--D-alanine ligase family. The cofactor is Mg(2+). Requires Mn(2+) as cofactor.

The protein resides in the cytoplasm. It catalyses the reaction 2 D-alanine + ATP = D-alanyl-D-alanine + ADP + phosphate + H(+). The protein operates within cell wall biogenesis; peptidoglycan biosynthesis. In terms of biological role, cell wall formation. The chain is D-alanine--D-alanine ligase from Desulfovibrio desulfuricans (strain ATCC 27774 / DSM 6949 / MB).